A 521-amino-acid chain; its full sequence is Insulinoma-associated protein 1 (521 aa).

Over residues 1–12 the composition is skewed to basic residues; the sequence is MPRGFLVKRSKK. The segment at 1–20 is SNAG domain; it reads MPRGFLVKRSKKSTPVSYRV. Disordered regions lie at residues 1-59, 76-107, and 180-230; these read MPRG…PPAL, GPPP…PTRP, and AEAA…KPKA. The interval 2–7 is required and sufficient for interaction with KDM1A; sequence PRGFLV. A necessary for interaction with CCND1 region spans residues 43–56; sequence PPVPSPGPLPPPPP. 2 stretches are compositionally biased toward pro residues: residues 43–58 and 76–85; these read PPVP…PPPA and GPPPPPPPGP. Low complexity predominate over residues 209–223; it reads AAVATEPPAKAAKAP. The C2H2-type 1; atypical zinc-finger motif lies at 272 to 292; it reads FICQLCKEEYADPFALAQHKC. A C2H2-type 2 zinc finger spans residues 300–322; it reads YRCPECAKVFSCPANLASHRRWH. The disordered stretch occupies residues 320–369; the sequence is RWHKPRPVPAAARAPEPEAATRAEAREAAGGGSSDRDTPSPGGVSESGSE. Residues 334–346 show a composition bias toward basic and acidic residues; it reads PEPEAATRAEARE. The C2H2-type 3 zinc-finger motif lies at 373–395; that stretch reads YECHHCAKKFRRQAYLRKHLLAH. Residues 398–419 form a disordered region; the sequence is ALQAKGAPPPPPPPPPPAEDIL. Residues 404-415 show a composition bias toward pro residues; sequence APPPPPPPPPPA. C2H2-type zinc fingers lie at residues 452–475 and 480–503; these read HLCP…RLLH and FPCK…NKCH.

The protein belongs to the INSM1 family. Interacts (via the N-terminal region) with CCND1 (via cyclin N-terminal domain); the interaction competes with the binding of CCND1 to CDK4 during cell cycle progression and increases its transcriptional repressor activity. Interacts with HDAC3; the interaction increases its transcriptional repressor activity. Interacts (via the SNAG domain) with HDAC1. Interacts (via the SNAG domain) with HDAC2. Interacts (via the SNAG domain) with KDM1A. Interacts (via the SNAG domain) with RCOR1. Interacts with SORBS1. As to expression, expressed in adrenal gland. Expressed in the dentate gyrus of the hippocampus and the wall of the lateral ventricle. Expressed in pancreatic and intestinal endocrine cells.

Its subcellular location is the nucleus. Sequence-specific DNA-binding transcriptional regulator that plays a key role in neurogenesis and neuroendocrine cell differentiation during embryonic and/or fetal development. Binds to the consensus sequence 5'-[TG][TC][TC][TT][GA]GGG[CG]A-3' in target promoters. Acts as a transcriptional repressor of NEUROD1 and INS expression via its interaction with cyclin CCND1 in a cell cycle-independent manner. Negatively regulates skeletal muscle-specific gene expression in endocrine cells of the pituitary by inhibiting the Notch signaling pathway. Represses target gene transcription by recruiting chromatin-modifying factors, such as HDAC1, HDAC2, HDAC3, KDM1A and RCOR1 histone deacetylases. Binds to its own promoter, suggesting autoregulation as a self-control feedback mechanism. Competes with histone H3 for the same binding site on the histone demethylase complex formed by KDM1A and RCOR1, and thereby inhibits demethylation of histone H3 at 'Lys-4'. Promotes the generation and expansion of neuronal basal progenitor cells in the developing neocortex. Involved in the differentiation of endocrine cells of the developing anterior pituitary gland, of the pancreas and intestine, and of sympatho-adrenal cells in the peripheral nervous system. Promotes cell cycle signaling arrest and inhibition of cellular proliferation. This chain is Insulinoma-associated protein 1 (Insm1), found in Mus musculus (Mouse).